The sequence spans 224 residues: LexA repressor (224 aa).

The segment at residues 31 to 51 (RAEIANTLGFKSANAAEEHLQ) is a DNA-binding region (H-T-H motif). Active-site for autocatalytic cleavage activity residues include S142 and K179.

It belongs to the peptidase S24 family. In terms of assembly, homodimer.

It carries out the reaction Hydrolysis of Ala-|-Gly bond in repressor LexA.. Its function is as follows. Represses a number of genes involved in the response to DNA damage (SOS response), including recA and lexA. In the presence of single-stranded DNA, RecA interacts with LexA causing an autocatalytic cleavage which disrupts the DNA-binding part of LexA, leading to derepression of the SOS regulon and eventually DNA repair. The sequence is that of LexA repressor from Delftia acidovorans (strain DSM 14801 / SPH-1).